Here is a 164-residue protein sequence, read N- to C-terminus: Putative deoxyuridine 5'-triphosphate nucleotidohydrolase (164 aa).

65–67 serves as a coordination point for substrate; sequence RSG. Position 71 is an N6-acetyllysine; by host (lysine 71). Substrate is bound by residues 79-82, glycine 90, and 138-139; these read GVVD and YG.

This sequence belongs to the dUTPase family. Mg(2+) serves as cofactor.

It catalyses the reaction dUTP + H2O = dUMP + diphosphate + H(+). This enzyme is involved in nucleotide metabolism: it produces dUMP, the immediate precursor of thymidine nucleotides and it decreases the intracellular concentration of dUTP so that uracil cannot be incorporated into DNA. The polypeptide is Putative deoxyuridine 5'-triphosphate nucleotidohydrolase (Dryophytes versicolor (chameleon treefrog)).